The sequence spans 319 residues: tRNA uridine(34) hydroxylase (319 aa).

The 99-residue stretch at glycine 123–serine 221 folds into the Rhodanese domain. The active-site Cysteine persulfide intermediate is cysteine 181. The disordered stretch occupies residues alanine 298 to arginine 319.

The protein belongs to the TrhO family.

The enzyme catalyses uridine(34) in tRNA + AH2 + O2 = 5-hydroxyuridine(34) in tRNA + A + H2O. Its function is as follows. Catalyzes oxygen-dependent 5-hydroxyuridine (ho5U) modification at position 34 in tRNAs. The chain is tRNA uridine(34) hydroxylase from Albidiferax ferrireducens (strain ATCC BAA-621 / DSM 15236 / T118) (Rhodoferax ferrireducens).